Here is a 261-residue protein sequence, read N- to C-terminus: uncharacterized protein (261 aa).

Transmembrane regions (helical) follow at residues R4–L21 and F33–F55.

The protein resides in the cell membrane. This is an uncharacterized protein from Archaeoglobus fulgidus (strain ATCC 49558 / DSM 4304 / JCM 9628 / NBRC 100126 / VC-16).